The sequence spans 453 residues: 3-phosphoshikimate 1-carboxyvinyltransferase (453 aa).

A compositionally biased stretch (polar residues) spans 1–12 (MDVNVTSSTVRG). The segment at 1–21 (MDVNVTSSTVRGTTRAPPSKS) is disordered. 3-phosphoshikimate contacts are provided by Lys-20, Ser-21, and Arg-25. Position 20 (Lys-20) interacts with phosphoenolpyruvate. Phosphoenolpyruvate is bound by residues Gly-97 and Arg-125. 3-phosphoshikimate-binding residues include Ser-170, Ser-171, Gln-172, Ser-198, Asp-330, and Lys-357. Gln-172 serves as a coordination point for phosphoenolpyruvate. Asp-330 (proton acceptor) is an active-site residue. Phosphoenolpyruvate-binding residues include Arg-361 and Arg-404.

It belongs to the EPSP synthase family. In terms of assembly, monomer.

It is found in the cytoplasm. It catalyses the reaction 3-phosphoshikimate + phosphoenolpyruvate = 5-O-(1-carboxyvinyl)-3-phosphoshikimate + phosphate. Its pathway is metabolic intermediate biosynthesis; chorismate biosynthesis. In terms of biological role, catalyzes the transfer of the enolpyruvyl moiety of phosphoenolpyruvate (PEP) to the 5-hydroxyl of shikimate-3-phosphate (S3P) to produce enolpyruvyl shikimate-3-phosphate and inorganic phosphate. This chain is 3-phosphoshikimate 1-carboxyvinyltransferase, found in Halorubrum lacusprofundi (strain ATCC 49239 / DSM 5036 / JCM 8891 / ACAM 34).